Here is a 269-residue protein sequence, read N- to C-terminus: uncharacterized protein (269 aa).

The region spanning Phe14–Arg89 is the ACT domain.

This is an uncharacterized protein from Bacillus subtilis (strain 168).